We begin with the raw amino-acid sequence, 153 residues long: CRIB domain-containing protein RIC4 (153 aa).

The 14-residue stretch at isoleucine 99–glycine 112 folds into the CRIB domain.

Interacts with ARAC4/ROP2 and ARAC11/ROP1. Expressed in roots, leaves, stems, flowers, siliques and pollen.

It is found in the cell membrane. Its function is as follows. Functions as a downstream effector of Rho-related GTP binding proteins of the 'Rho of Plants' (ROPs) family. Participates in the propagation of ROP GTPase signals in specific cellular responses. Required for actin cortical microfilament assembly. Activated by ARAC4/ROP2 to promote the assembly of cortical actin microfilaments required for lobe formation and lateral expansion of pavement cells. Interaction with, and activation by ARAC4/ROP2 is inhibited by RIC1. Functions as a downstream effector of ARAC11/ROP1 to promote the assembly of apical F-actin associated with vesicle accumulation in the tip of the growing pollen tube. Counteracts the ARAC11/ROP1-RIC3 pathway, which activates calcium signaling that leads to apical F-actin disassembly associated with exocytosis, to control actin dynamics and pollen tube apical growth. Downstream of ARAC11/ROP1, is involved in the growth responses to the root-colonizing endophytic fungus P.indica. This chain is CRIB domain-containing protein RIC4 (RIC4), found in Arabidopsis thaliana (Mouse-ear cress).